The primary structure comprises 397 residues: Protochlorophyllide reductase, chloroplastic (397 aa).

The transit peptide at 1–57 directs the protein to the chloroplast; the sequence is MALTMSAKSVSARAQVSSKAQAAPAVAVSGRTSSRVMPAPALAARSSVARTPLVVCA.

The protein belongs to the short-chain dehydrogenases/reductases (SDR) family. POR subfamily.

It localises to the plastid. Its subcellular location is the chloroplast. The enzyme catalyses chlorophyllide a + NADP(+) = protochlorophyllide a + NADPH + H(+). It participates in porphyrin-containing compound metabolism; chlorophyll biosynthesis. Its function is as follows. Phototransformation of protochlorophyllide (Pchlide) to chlorophyllide (Chlide). The chain is Protochlorophyllide reductase, chloroplastic (PORA) from Chlamydomonas reinhardtii (Chlamydomonas smithii).